Here is a 336-residue protein sequence, read N- to C-terminus: Quinolinate synthase (336 aa).

Residues His25 and Ser42 each contribute to the iminosuccinate site. A [4Fe-4S] cluster-binding site is contributed by Cys86. Residues 117 to 119 and Ser138 each bind iminosuccinate; that span reads YIN. [4Fe-4S] cluster is bound at residue Cys198. Iminosuccinate contacts are provided by residues 224–226 and Thr241; that span reads HPE. Cys288 serves as a coordination point for [4Fe-4S] cluster.

Belongs to the quinolinate synthase family. Type 3 subfamily. It depends on [4Fe-4S] cluster as a cofactor.

It localises to the cytoplasm. The catalysed reaction is iminosuccinate + dihydroxyacetone phosphate = quinolinate + phosphate + 2 H2O + H(+). The protein operates within cofactor biosynthesis; NAD(+) biosynthesis; quinolinate from iminoaspartate: step 1/1. Its function is as follows. Catalyzes the condensation of iminoaspartate with dihydroxyacetone phosphate to form quinolinate. In Helicobacter pylori (strain ATCC 700392 / 26695) (Campylobacter pylori), this protein is Quinolinate synthase.